We begin with the raw amino-acid sequence, 464 residues long: Isthmin-1 (464 aa).

Positions Met1–Ala29 are cleaved as a signal peptide. Asn39 carries N-linked (GlcNAc...) asparagine glycosylation. Disordered stretches follow at residues Asn50–Asp98, Pro135–Ser155, and Ser173–Gly219. Polar residues predominate over residues Val51–Leu63. 2 stretches are compositionally biased toward basic and acidic residues: residues Glu66–Ala76 and Glu138–Asn147. The TSP type-1 domain occupies Asp218–Pro262. Disulfide bonds link Cys229/Cys256, Cys233/Cys261, and Cys244/Cys248. Residues Leu289–Glu452 enclose the AMOP domain.

It belongs to the isthmin family. Interacts with integrin ITGAV/ITGB5.

It is found in the secreted. Acts as an angiogenesis inhibitor. The chain is Isthmin-1 (ISM1) from Homo sapiens (Human).